Consider the following 430-residue polypeptide: Glucose-6-phosphate isomerase (430 aa).

E284 acts as the Proton donor in catalysis. Active-site residues include H305 and K420.

Belongs to the GPI family.

The protein localises to the cytoplasm. The catalysed reaction is alpha-D-glucose 6-phosphate = beta-D-fructose 6-phosphate. Its pathway is carbohydrate biosynthesis; gluconeogenesis. It participates in carbohydrate degradation; glycolysis; D-glyceraldehyde 3-phosphate and glycerone phosphate from D-glucose: step 2/4. In terms of biological role, catalyzes the reversible isomerization of glucose-6-phosphate to fructose-6-phosphate. The polypeptide is Glucose-6-phosphate isomerase (Mycoplasma pneumoniae (strain ATCC 29342 / M129 / Subtype 1) (Mycoplasmoides pneumoniae)).